Consider the following 528-residue polypeptide: Phosphoenolpyruvate carboxykinase (ATP) (528 aa).

Substrate is bound by residues Arg56, Tyr192, and Lys198. ATP-binding positions include Lys198, His217, and 233–241 (GLSGTGKTT). Mn(2+) contacts are provided by Lys198 and His217. A Mn(2+)-binding site is contributed by Asp254. 3 residues coordinate ATP: Glu282, Arg319, and Thr444. Arg319 contacts substrate.

Belongs to the phosphoenolpyruvate carboxykinase (ATP) family. Mn(2+) is required as a cofactor.

It is found in the cytoplasm. The enzyme catalyses oxaloacetate + ATP = phosphoenolpyruvate + ADP + CO2. It functions in the pathway carbohydrate biosynthesis; gluconeogenesis. Involved in the gluconeogenesis. Catalyzes the conversion of oxaloacetate (OAA) to phosphoenolpyruvate (PEP) through direct phosphoryl transfer between the nucleoside triphosphate and OAA. The protein is Phosphoenolpyruvate carboxykinase (ATP) of Bacillus anthracis (strain A0248).